We begin with the raw amino-acid sequence, 80 residues long: Cell division protein ZapB (80 aa).

Residues 3–80 are a coiled coil; sequence FEVLEKLEAK…ALLGKMEDVE (78 aa).

It belongs to the ZapB family. As to quaternary structure, homodimer. The ends of the coiled-coil dimer bind to each other, forming polymers. Interacts with FtsZ.

It is found in the cytoplasm. Its function is as follows. Non-essential, abundant cell division factor that is required for proper Z-ring formation. It is recruited early to the divisome by direct interaction with FtsZ, stimulating Z-ring assembly and thereby promoting cell division earlier in the cell cycle. Its recruitment to the Z-ring requires functional FtsA or ZipA. This chain is Cell division protein ZapB, found in Vibrio vulnificus (strain CMCP6).